We begin with the raw amino-acid sequence, 271 residues long: Colicin-M (271 aa).

The short motif at Glu-2–Pro-9 is the TonB box element.

Its function is as follows. Colicins are polypeptide toxins produced by and active against E.coli and closely related bacteria. Functionally, this is a calcium-requiring inhibitor for murein biosynthesis; it causes lysis of sensitive cells accompanied by murein degradation. The target site is possibly the cytoplasmic membrane. In Escherichia coli, this protein is Colicin-M (cma).